A 400-amino-acid polypeptide reads, in one-letter code: Acetate kinase (400 aa).

Residue asparagine 9 participates in Mg(2+) binding. Residue lysine 16 participates in ATP binding. Arginine 90 contributes to the substrate binding site. The active-site Proton donor/acceptor is the aspartate 147. Residues 207–211 (HIGNG), 282–284 (DLR), and 330–334 (GIGEN) each bind ATP. Glutamate 385 is a Mg(2+) binding site.

This sequence belongs to the acetokinase family. In terms of assembly, homodimer. The cofactor is Mg(2+). Requires Mn(2+) as cofactor.

Its subcellular location is the cytoplasm. It catalyses the reaction acetate + ATP = acetyl phosphate + ADP. It participates in metabolic intermediate biosynthesis; acetyl-CoA biosynthesis; acetyl-CoA from acetate: step 1/2. Its function is as follows. Catalyzes the formation of acetyl phosphate from acetate and ATP. Can also catalyze the reverse reaction. This Staphylococcus aureus (strain USA300) protein is Acetate kinase.